The sequence spans 142 residues: Large ribosomal subunit protein uL11 (142 aa).

Belongs to the universal ribosomal protein uL11 family. In terms of assembly, part of the ribosomal stalk of the 50S ribosomal subunit. Interacts with L10 and the large rRNA to form the base of the stalk. L10 forms an elongated spine to which L12 dimers bind in a sequential fashion forming a multimeric L10(L12)X complex. Post-translationally, one or more lysine residues are methylated.

Forms part of the ribosomal stalk which helps the ribosome interact with GTP-bound translation factors. The chain is Large ribosomal subunit protein uL11 from Ruthia magnifica subsp. Calyptogena magnifica.